Here is a 1373-residue protein sequence, read N- to C-terminus: DNA-directed RNA polymerase subunit beta (1373 aa).

This sequence belongs to the RNA polymerase beta chain family. In terms of assembly, the RNAP catalytic core consists of 2 alpha, 1 beta, 1 beta' and 1 omega subunit. When a sigma factor is associated with the core the holoenzyme is formed, which can initiate transcription.

The enzyme catalyses RNA(n) + a ribonucleoside 5'-triphosphate = RNA(n+1) + diphosphate. Its function is as follows. DNA-dependent RNA polymerase catalyzes the transcription of DNA into RNA using the four ribonucleoside triphosphates as substrates. This is DNA-directed RNA polymerase subunit beta from Rickettsia massiliae.